The primary structure comprises 236 residues: UPF0177 protein YaiH (236 aa).

Transmembrane regions (helical) follow at residues 16–36 (YFSLFILLFAIYWFPDVILGY), 51–71 (ATATWIFLGNMAISLFLGILI), 90–110 (ILFLLFTTIVLFIIYFFTFTY), 131–151 (IVFPFVQFISFAICAPIFEEA), 180–200 (TGANPILIVYLPMSVVLTLIY), and 210–230 (ILVHCLMNALLPTIIVFLQTI).

This sequence belongs to the UPF0177 family.

It is found in the cell membrane. This is UPF0177 protein YaiH (yaiH) from Lactococcus lactis subsp. lactis (strain IL1403) (Streptococcus lactis).